Reading from the N-terminus, the 219-residue chain is Germin-like protein subfamily 2 member 1 (219 aa).

The signal sequence occupies residues M1–S21. Residues C32 and C47 are joined by a disulfide bond. Residues Q61–K209 enclose the Cupin type-1 domain. An N-linked (GlcNAc...) asparagine glycan is attached at N70. Mn(2+) is bound by residues H109, H111, E116, and H155.

Belongs to the germin family. In terms of assembly, oligomer (believed to be a pentamer but probably hexamer).

Its subcellular location is the secreted. It localises to the extracellular space. It is found in the apoplast. May play a role in plant defense. Probably has no oxalate oxidase activity even if the active site is conserved. The polypeptide is Germin-like protein subfamily 2 member 1 (GLP4) (Arabidopsis thaliana (Mouse-ear cress)).